The primary structure comprises 274 residues: Pantothenate synthetase (274 aa).

26–33 (MGNLHAGH) lines the ATP pocket. The Proton donor role is filled by His33. (R)-pantoate is bound at residue Gln57. Position 57 (Gln57) interacts with beta-alanine. 143-146 (GKKD) serves as a coordination point for ATP. Gln149 is a (R)-pantoate binding site. ATP contacts are provided by residues Val172 and 180–183 (LSSR).

The protein belongs to the pantothenate synthetase family. In terms of assembly, homodimer.

The protein resides in the cytoplasm. The enzyme catalyses (R)-pantoate + beta-alanine + ATP = (R)-pantothenate + AMP + diphosphate + H(+). Its pathway is cofactor biosynthesis; (R)-pantothenate biosynthesis; (R)-pantothenate from (R)-pantoate and beta-alanine: step 1/1. Its function is as follows. Catalyzes the condensation of pantoate with beta-alanine in an ATP-dependent reaction via a pantoyl-adenylate intermediate. This Dechloromonas aromatica (strain RCB) protein is Pantothenate synthetase.